The chain runs to 703 residues: Zinc finger protein 750 (703 aa).

A CCHC-type zinc finger spans residues 25–51 (YKCFQCPFTCNEKSHLFNHMKYGLCKN). Residues C27, C30, H43, and C49 each contribute to the Zn(2+) site. Disordered stretches follow at residues 60-96 (DRVPKCSKPNSSDPKQTNQPDPVVKPTSSKPVPSGLS), 121-147 (GPHRCLGQKPTPHKEAAPPSPAPEAAV), 362-617 (PSKL…EQKQ), and 633-703 (NVEP…TRVS). Over residues 67-78 (KPNSSDPKQTNQ) the composition is skewed to polar residues. Residues 79–93 (PDPVVKPTSSKPVPS) show a composition bias toward low complexity. A compositionally biased stretch (basic and acidic residues) spans 375-399 (TELEKQSPTPEAKEPSKDGQRDTEG). Residues 418–428 (SPTNFTQTSQP) show a composition bias toward polar residues. Over residues 583 to 592 (SSGDGPDPSS) the composition is skewed to low complexity. Over residues 605-616 (QDIRAADSDEQK) the composition is skewed to basic and acidic residues.

It localises to the nucleus. Transcription factor involved in epidermis differentiation. Required for terminal epidermal differentiation: acts downstream of p63/TP63 and activates expression of late epidermal differentiation genes. Specifically binds to the promoter of KLF4 and promotes its expression. The chain is Zinc finger protein 750 (ZNF750) from Bos taurus (Bovine).